Here is a 704-residue protein sequence, read N- to C-terminus: SH3KBP1-binding protein 1 (704 aa).

Ala-2 is modified (N-acetylalanine). Positions 19 to 88 (EVIHLNVGGK…LRTKELDPRG (70 aa)) constitute a BTB domain. Positions 146-165 (VGPQQIGGRPAPVRRSNTMP) are disordered. At Thr-163 the chain carries Phosphothreonine. 5 WD repeats span residues 233–280 (RLDW…GGSE), 283–322 (VFHLGVPVEALFFVGNQLIATSHTGRIGVWNAVTKHWQVQ), 324–359 (VQPITSYDAAGSFLLLGCSNGSIYYVDVQKFPLRMK), 428–466 (VHRSPVTKIMLSEKHLISVCADNNHVRTWSVTRFRGMIS), and 548–586 (LECEGSRRLGSRPRRYLLTGQANGSLAMWDLTTAMDGLG). Positions 609–704 (PLASSRGSFP…LKKTLNETSF (96 aa)) are disordered. Over residues 612 to 631 (SSRGSFPSPSPRTSLTSLHS) the composition is skewed to low complexity. Positions 618 to 623 (PSPSPR) match the PXXXPR motif. Phosphoserine is present on residues Ser-644 and Ser-646. A PXXXPR motif is present at residues 678–683 (PTPAPR). At Thr-693 the chain carries Phosphothreonine.

It belongs to the KCTD3 family. Monomer. Interacts with CUL3; interaction is direct and forms a 5:5 heterodecamer. Interacts (via PXXXPR motifs) with SH3KBP1 (via SH3 domains). Directly interacts with cathepsin B/CTSB.

It localises to the lysosome. In terms of biological role, inhibits CBL-SH3KBP1 complex mediated down-regulation of EGFR signaling by sequestration of SH3KBP1. Binds to SH3KBP1 and prevents its interaction with CBL and inhibits translocation of SH3KBP1 to EGFR containing vesicles upon EGF stimulation. This Mus musculus (Mouse) protein is SH3KBP1-binding protein 1 (Shkbp1).